The following is a 230-amino-acid chain: Ion-translocating oxidoreductase complex subunit E (230 aa).

The next 6 membrane-spanning stretches (helical) occupy residues 18–38 (ALVQ…ATNA), 39–59 (LGLG…VSAL), 63–83 (TPAE…VSAV), 86–106 (LINA…PLIV), 125–145 (WLSA…MFVL), and 182–202 (PFLL…MLAV).

The protein belongs to the NqrDE/RnfAE family. In terms of assembly, the complex is composed of six subunits: RsxA, RsxB, RsxC, RsxD, RsxE and RsxG.

It localises to the cell inner membrane. Its function is as follows. Part of a membrane-bound complex that couples electron transfer with translocation of ions across the membrane. Required to maintain the reduced state of SoxR. The sequence is that of Ion-translocating oxidoreductase complex subunit E from Salmonella dublin (strain CT_02021853).